We begin with the raw amino-acid sequence, 35 residues long: Kappa-theraphotoxin-Gr1b (35 aa).

Cystine bridges form between Cys2/Cys16, Cys9/Cys21, and Cys15/Cys28. Positions 4–6 (YLF) are involved in active face.

The protein belongs to the neurotoxin 10 (Hwtx-1) family. 09 (HaTx) subfamily. As to expression, expressed by the venom gland.

It is found in the secreted. Functionally, inhibitor of voltage-gated potassium channels. Inhibits Kv2.1/KCNB1 channels, by shifting activation of the channel to more depolarized voltages. The toxin binding sites may be situated on the S3-S4 extracellular linker of the channel. One, two, three or four toxin molecules may bind the Kv2.1/KCNB1 channel. May need to partition into the membrane in order to bind to the channel. Antibacterial activity is not observed. The protein is Kappa-theraphotoxin-Gr1b of Grammostola rosea (Chilean rose tarantula).